The primary structure comprises 1466 residues: ABC transporter G family member 40 (1466 aa).

The disordered stretch occupies residues 1–21; that stretch reads MSHRHHAALVASASGRSPSWG. The 274-residue stretch at 176-449 folds into the ABC transporter 1 domain; the sequence is GLIGQFGSSN…FEASGFRCPQ (274 aa). Residue 209–216 coordinates ATP; that stretch reads GPPSSGKS. The ABC transmembrane type-2 1 domain occupies 527-740; sequence ESLKAVLCRE…SQNAISINEF (214 aa). Helical transmembrane passes span 545–565, 581–601, 633–653, 664–684, 690–710, and 776–796; these read FLYI…MTVF, FLGA…SELN, VPVS…VMGF, FLAF…LGAI, IAIS…GFVI, and FWLS…LYIL. Over residues 821–831 the composition is skewed to basic and acidic residues; the sequence is YTETRNEEHRS. Positions 821 to 851 are disordered; it reads YTETRNEEHRSRTSTTTSSIPTSANGEGNRP. A compositionally biased stretch (low complexity) spans 833–843; sequence TSTTTSSIPTS. The ABC transporter 2 domain occupies 865-1117; it reads LCFNHLNYYV…KLVEYFETIL (253 aa). 910 to 917 is an ATP binding site; sequence GVSGAGKT. An ABC transmembrane type-2 2 domain is found at 1190–1404; sequence IQCVANLWKQ…TIYGVIASQF (215 aa). A run of 7 helical transmembrane segments spans residues 1209 to 1229, 1241 to 1261, 1297 to 1317, 1327 to 1347, 1355 to 1375, 1396 to 1416, and 1435 to 1455; these read YNSL…TVFW, LYNL…TNCM, FIYN…MIGY, FLFF…MLVA, ANIL…FLIF, IYGV…VPGG, and FLGY…LIFG.

The protein belongs to the ABC transporter superfamily. ABCG family. PDR (TC 3.A.1.205) subfamily.

The protein localises to the membrane. The chain is ABC transporter G family member 40 from Oryza sativa subsp. japonica (Rice).